The primary structure comprises 161 residues: 6,7-dimethyl-8-ribityllumazine synthase (161 aa).

Residues Trp31, 63-65 (SFE), and 85-87 (VVI) contribute to the 5-amino-6-(D-ribitylamino)uracil site. Residue 90–91 (GT) participates in (2S)-2-hydroxy-3-oxobutyl phosphate binding. The active-site Proton donor is the His93. Phe118 is a binding site for 5-amino-6-(D-ribitylamino)uracil. Residue Arg132 coordinates (2S)-2-hydroxy-3-oxobutyl phosphate.

Belongs to the DMRL synthase family.

It catalyses the reaction (2S)-2-hydroxy-3-oxobutyl phosphate + 5-amino-6-(D-ribitylamino)uracil = 6,7-dimethyl-8-(1-D-ribityl)lumazine + phosphate + 2 H2O + H(+). The protein operates within cofactor biosynthesis; riboflavin biosynthesis; riboflavin from 2-hydroxy-3-oxobutyl phosphate and 5-amino-6-(D-ribitylamino)uracil: step 1/2. Its function is as follows. Catalyzes the formation of 6,7-dimethyl-8-ribityllumazine by condensation of 5-amino-6-(D-ribitylamino)uracil with 3,4-dihydroxy-2-butanone 4-phosphate. This is the penultimate step in the biosynthesis of riboflavin. This chain is 6,7-dimethyl-8-ribityllumazine synthase, found in Pseudarthrobacter chlorophenolicus (strain ATCC 700700 / DSM 12829 / CIP 107037 / JCM 12360 / KCTC 9906 / NCIMB 13794 / A6) (Arthrobacter chlorophenolicus).